The sequence spans 331 residues: 6-phosphogluconolactonase (331 aa).

It belongs to the cycloisomerase 2 family.

The catalysed reaction is 6-phospho-D-glucono-1,5-lactone + H2O = 6-phospho-D-gluconate + H(+). It participates in carbohydrate degradation; pentose phosphate pathway; D-ribulose 5-phosphate from D-glucose 6-phosphate (oxidative stage): step 2/3. Functionally, catalyzes the hydrolysis of 6-phosphogluconolactone to 6-phosphogluconate. This Salmonella typhi protein is 6-phosphogluconolactonase.